The primary structure comprises 471 residues: Membrane-associated sulfotransferase kil1 (471 aa).

Topologically, residues 1 to 12 (MSTTSMILTKKN) are cytoplasmic. The helical; Signal-anchor for type II membrane protein transmembrane segment at 13 to 33 (IIILSIIIITIIAYQFYITSP) threads the bilayer. The Lumenal segment spans residues 34–471 (QSFPSSNTIT…LLNRDFKWQN (438 aa)). Residue N47 is glycosylated (N-linked (GlcNAc...) asparagine). Composition is skewed to low complexity over residues 89–105 (NQNE…NNNK) and 112–127 (NNNN…NNNN). Positions 89 to 127 (NQNENQNQINNEYNNNKLNDEQENNNNNNYNNNNNNNNN) are disordered. 3'-phosphoadenylyl sulfate contacts are provided by residues 167-172 (KSGTTF), R252, and S260. N324 and N344 each carry an N-linked (GlcNAc...) asparagine glycan. 3'-phosphoadenylyl sulfate is bound at residue Y348.

Belongs to the sulfotransferase 1 family.

It localises to the membrane. Functionally, sulfotransferase involved in intracellular killing of bacteria. This chain is Membrane-associated sulfotransferase kil1 (kil1), found in Dictyostelium discoideum (Social amoeba).